The chain runs to 349 residues: Protein-glutamate methylesterase/protein-glutamine glutaminase (349 aa).

A Response regulatory domain is found at 5-122 (RVLSVDDSAL…REGMLAYSEM (118 aa)). 4-aspartylphosphate is present on Asp56. The CheB-type methylesterase domain occupies 152–344 (LLSSEKLIAI…QQMLATISAG (193 aa)). Catalysis depends on residues Ser164, His190, and Asp286.

It belongs to the CheB family. Post-translationally, phosphorylated by CheA. Phosphorylation of the N-terminal regulatory domain activates the methylesterase activity.

The protein resides in the cytoplasm. The enzyme catalyses [protein]-L-glutamate 5-O-methyl ester + H2O = L-glutamyl-[protein] + methanol + H(+). The catalysed reaction is L-glutaminyl-[protein] + H2O = L-glutamyl-[protein] + NH4(+). In terms of biological role, involved in chemotaxis. Part of a chemotaxis signal transduction system that modulates chemotaxis in response to various stimuli. Catalyzes the demethylation of specific methylglutamate residues introduced into the chemoreceptors (methyl-accepting chemotaxis proteins or MCP) by CheR. Also mediates the irreversible deamidation of specific glutamine residues to glutamic acid. The chain is Protein-glutamate methylesterase/protein-glutamine glutaminase from Shigella flexneri.